The chain runs to 419 residues: UDP-N-acetylglucosamine 1-carboxyvinyltransferase (419 aa).

A phosphoenolpyruvate-binding site is contributed by 22–23 (KN). A UDP-N-acetyl-alpha-D-glucosamine-binding site is contributed by Arg-93. Catalysis depends on Cys-117, which acts as the Proton donor. Cys-117 carries the 2-(S-cysteinyl)pyruvic acid O-phosphothioketal modification. Residues Asp-307 and Ile-329 each coordinate UDP-N-acetyl-alpha-D-glucosamine.

It belongs to the EPSP synthase family. MurA subfamily.

The protein localises to the cytoplasm. The enzyme catalyses phosphoenolpyruvate + UDP-N-acetyl-alpha-D-glucosamine = UDP-N-acetyl-3-O-(1-carboxyvinyl)-alpha-D-glucosamine + phosphate. Its pathway is cell wall biogenesis; peptidoglycan biosynthesis. Cell wall formation. Adds enolpyruvyl to UDP-N-acetylglucosamine. In Shewanella piezotolerans (strain WP3 / JCM 13877), this protein is UDP-N-acetylglucosamine 1-carboxyvinyltransferase.